A 474-amino-acid polypeptide reads, in one-letter code: MIMNKMKNFKRRFSLSVPRTETIEESLAEFTEQFNQLHNRRNENLQLGPLGRDPPQECSTFSPTDSGEEPGQLSPGVQFQRRQNQRRFSMEDVSKRLSLPMDIRLPQEFLQKLQMESPDLPKPLSRMSRRASLSDIGFGKLETYVKLDKLGEGTYATVFKGRSKLTENLVALKEIRLEHEEGAPCTAIREVSLLKNLKHANIVTLHDLIHTDRSLTLVFEYLDSDLKQYLDHCGNLMSMHNVKIFMFQLLRGLAYCHHRKILHRDLKPQNLLINERGELKLADFGLARAKSVPTKTYSNEVVTLWYRPPDVLLGSTEYSTPIDMWGVGCIHYEMATGRPLFPGSTVKEELHLIFRLLGTPTEETWPGVTAFSEFRTYSFPCYLPQPLINHAPRLDTDGIHLLSSLLLYESKSRMSAEAALSHSYFRSLGERVHQLEDTASIFSLKEIQLQKDPGYRGLAFQQPGRGKNRRQSIF.

Residues Ser-14, Ser-74, Ser-89, Ser-98, Ser-117, and Ser-132 each carry the phosphoserine modification. Residues 44–93 (NLQLGPLGRDPPQECSTFSPTDSGEEPGQLSPGVQFQRRQNQRRFSMEDV) are disordered. The region spanning 144–425 (YVKLDKLGEG…AEAALSHSYF (282 aa)) is the Protein kinase domain. Residues 150 to 158 (LGEGTYATV) and Lys-173 contribute to the ATP site. Asp-265 (proton acceptor) is an active-site residue. 2 positions are modified to phosphoserine: Ser-440 and Ser-443.

The protein belongs to the protein kinase superfamily. CMGC Ser/Thr protein kinase family. CDC2/CDKX subfamily. Isoform 2 expression is limited to several subcortical nuclei of the basal gangli and the spinal cord. Isoform 1 is widely expressed.

It catalyses the reaction L-seryl-[protein] + ATP = O-phospho-L-seryl-[protein] + ADP + H(+). The enzyme catalyses L-threonyl-[protein] + ATP = O-phospho-L-threonyl-[protein] + ADP + H(+). In terms of biological role, may play a role in signal transduction cascades in terminally differentiated cells. This chain is Cyclin-dependent kinase 18 (CDK18), found in Homo sapiens (Human).